A 697-amino-acid polypeptide reads, in one-letter code: Zinc finger protein 12 (697 aa).

A Glycyl lysine isopeptide (Lys-Gly) (interchain with G-Cter in SUMO2) cross-link involves residue Lys3. The KRAB domain maps to 8-79 (VSFKDVAVDF…EGEFLLQSYP (72 aa)). Glycyl lysine isopeptide (Lys-Gly) (interchain with G-Cter in SUMO2) cross-links involve residues Lys98, Lys179, Lys182, Lys209, Lys215, Lys224, Lys239, and Lys267. 2 consecutive C2H2-type zinc fingers follow at residues 269–291 (YECSECGKSFCKKSKFIIHQRTH) and 297–319 (YECNQCGKSFCQKGTLTVHQRTH). Residues Lys309, Lys323, Lys337, and Lys365 each participate in a glycyl lysine isopeptide (Lys-Gly) (interchain with G-Cter in SUMO2) cross-link. C2H2-type zinc fingers lie at residues 325-347 (YECNECGKNFYQKLHLIQHQRTH), 353-375 (YECSYCGKSFCQKTHLTQHQRTH), 381-403 (YVCHDCGKTFSQKSALNDHQKIH), 409-431 (YKCSECGKCFCRKSTLTTHLRTH), 437-459 (YECNECGKFFSRLSYLTVHYRTH), 465-487 (YECNECGKTFYLNSALMRHQRVH), 493-515 (YECNECGKLFSQLSYLTIHHRTH), and 521-543 (YECSECGKTFYQNSALCRHRRIH). Glycyl lysine isopeptide (Lys-Gly) (interchain with G-Cter in SUMO2) cross-links involve residues Lys544 and Lys547. C2H2-type zinc fingers lie at residues 549-571 (YECYICGKFFSQMSYLTIHHRIH), 577-599 (YECSECGKTFCQNSALNRHQRTH), 605-627 (YECYECGKCFSQMSYLTIHHRIH), 633-655 (FECNECGKAFSRMSYLTVHYRTH), and 661-683 (YECTECGKKFYHKSAFNSHQRIH).

Belongs to the krueppel C2H2-type zinc-finger protein family. In terms of tissue distribution, widely expressed in various adult tissues and embryonic developmental stages (isoform 3).

It localises to the nucleus. Functionally, transcriptional repressor which suppresses activation protein 1 (AP-1)- and serum response element (SRE)-mediated transcriptional activity. This chain is Zinc finger protein 12 (ZNF12), found in Homo sapiens (Human).